Reading from the N-terminus, the 216-residue chain is MSKAQFLREYKLVVVGGGGVGKSALTIQFIQSHFVDEYDPTIEDSYRKQCIIDEEVALLDVLDTAGQEEYGAMREQYMRTGEGFLLVYSITSRSSFEEVSTFHQQILRVKDKDYFPVVVVANKCDLEYERQVQPHEGRDLAKRFNAQCIETSAKQRVNVDEAFIAVVRAIRRYQKESGPPQAVNAPAKSQMSAVGGRAAEKDDHVDKGCCRGCVVL.

16–23 (GGGGVGKS) contacts GTP. Residues 38 to 46 (YDPTIEDSY) carry the Effector region motif. Residues 63 to 67 (DTAGQ) and 122 to 125 (NKCD) contribute to the GTP site. S-palmitoyl cysteine attachment occurs at residues Cys-209 and Cys-210. Cys-213 carries the cysteine methyl ester modification. A lipid anchor (S-geranylgeranyl cysteine) is attached at Cys-213. A propeptide spans 214 to 216 (VVL) (removed in mature form).

Belongs to the small GTPase superfamily. Ras family.

Its subcellular location is the cell membrane. The enzyme catalyses GTP + H2O = GDP + phosphate + H(+). With respect to regulation, alternates between an inactive form bound to GDP and an active form bound to GTP. Activated by a guanine nucleotide-exchange factor (GEF) and inactivated by a GTPase-activating protein (GAP). The chain is Ras-like protein (RAS1) from Cryptococcus neoformans var. neoformans serotype D (strain B-3501A) (Filobasidiella neoformans).